The primary structure comprises 496 residues: Beta-amylase (496 aa).

Residues Asp-54, His-94, and Asp-102 each coordinate substrate. The active-site Proton donor is Glu-187. Positions 296, 301, and 343 each coordinate substrate. Glu-381 functions as the Proton acceptor in the catalytic mechanism. Substrate-binding positions include 382–383 and Arg-421; that span reads NA.

This sequence belongs to the glycosyl hydrolase 14 family.

The catalysed reaction is Hydrolysis of (1-&gt;4)-alpha-D-glucosidic linkages in polysaccharides so as to remove successive maltose units from the non-reducing ends of the chains.. This is Beta-amylase (BMY1) from Trifolium repens (Creeping white clover).